We begin with the raw amino-acid sequence, 376 residues long: Alkanesulfonate monooxygenase (376 aa).

This sequence belongs to the SsuD family.

The enzyme catalyses an alkanesulfonate + FMNH2 + O2 = an aldehyde + FMN + sulfite + H2O + 2 H(+). Catalyzes the desulfonation of aliphatic sulfonates. This chain is Alkanesulfonate monooxygenase, found in Bacillus licheniformis (strain ATCC 14580 / DSM 13 / JCM 2505 / CCUG 7422 / NBRC 12200 / NCIMB 9375 / NCTC 10341 / NRRL NRS-1264 / Gibson 46).